The sequence spans 274 residues: Proteasome subunit beta type-5-A (274 aa).

Residues 1-57 (MKLDTSGFETSMPMIGFGSSSDMLDELSSVPSFDLPRTKEFDGFQKKAKDMLKHAKG) constitute a propeptide, removed in mature form. Residue Thr-58 is the Nucleophile of the active site.

The protein belongs to the peptidase T1B family. Component of the 20S core complex of the 26S proteasome. The 26S proteasome is composed of a core protease (CP), known as the 20S proteasome, capped at one or both ends by the 19S regulatory particle (RP/PA700). The 20S proteasome core is composed of 28 subunits that are arranged in four stacked rings, resulting in a barrel-shaped structure. The two end rings are each formed by seven alpha subunits, and the two central rings are each formed by seven beta subunits. The catalytic chamber with the active sites is on the inside of the barrel. Ubiquitous low levels, higher expression in siliques and flowers.

It is found in the cytoplasm. The protein resides in the nucleus. It catalyses the reaction Cleavage of peptide bonds with very broad specificity.. Functionally, the proteasome is a multicatalytic proteinase complex which is characterized by its ability to cleave peptides with Arg, Phe, Tyr, Leu, and Glu adjacent to the leaving group at neutral or slightly basic pH. The proteasome has an ATP-dependent proteolytic activity. This Arabidopsis thaliana (Mouse-ear cress) protein is Proteasome subunit beta type-5-A (PBE1).